Here is a 326-residue protein sequence, read N- to C-terminus: Endo-beta-1,4-glucanase A (326 aa).

Positions 1 to 19 (MRSLVLLSSVLALVAPSKG) are cleaved as a signal peptide. Residue glutamate 150 is the Proton donor of the active site. Glutamate 257 functions as the Nucleophile in the catalytic mechanism.

This sequence belongs to the glycosyl hydrolase 5 (cellulase A) family.

It localises to the secreted. It catalyses the reaction Endohydrolysis of (1-&gt;4)-beta-D-glucosidic linkages in cellulose, lichenin and cereal beta-D-glucans.. Has endoglucanase activity on substrates containing beta-1,4 glycosidic bonds, like in carboxymethylcellulose (CMC), hydroxyethylcellulose (HEC) and beta-glucan. Involved in the degradation of complex natural cellulosic substrates. This is Endo-beta-1,4-glucanase A (eglA) from Emericella nidulans (strain FGSC A4 / ATCC 38163 / CBS 112.46 / NRRL 194 / M139) (Aspergillus nidulans).